The sequence spans 225 residues: Peptidyl-prolyl cis-trans isomerase D (225 aa).

Positions methionine 1–alanine 22 are cleaved as a signal peptide. The region spanning tyrosine 37 to glutamate 195 is the PPIase cyclophilin-type domain. An N-linked (GlcNAc...) asparagine glycan is attached at asparagine 139. The short motif at histidine 222 to leucine 225 is the Prevents secretion from ER element.

It belongs to the cyclophilin-type PPIase family. PPIase B subfamily.

Its subcellular location is the endoplasmic reticulum lumen. It catalyses the reaction [protein]-peptidylproline (omega=180) = [protein]-peptidylproline (omega=0). Its function is as follows. PPIases accelerate the folding of proteins. It catalyzes the cis-trans isomerization of proline imidic peptide bonds in oligopeptides. This Saccharomyces cerevisiae (strain ATCC 204508 / S288c) (Baker's yeast) protein is Peptidyl-prolyl cis-trans isomerase D.